The sequence spans 133 residues: Aspartate 1-decarboxylase (133 aa).

The active-site Schiff-base intermediate with substrate; via pyruvic acid is the serine 26. Serine 26 carries the post-translational modification Pyruvic acid (Ser). Threonine 58 serves as a coordination point for substrate. Tyrosine 59 acts as the Proton donor in catalysis. 74-76 is a binding site for substrate; that stretch reads GAA.

It belongs to the PanD family. In terms of assembly, heterooctamer of four alpha and four beta subunits. Requires pyruvate as cofactor. Post-translationally, is synthesized initially as an inactive proenzyme, which is activated by self-cleavage at a specific serine bond to produce a beta-subunit with a hydroxyl group at its C-terminus and an alpha-subunit with a pyruvoyl group at its N-terminus.

The protein resides in the cytoplasm. The catalysed reaction is L-aspartate + H(+) = beta-alanine + CO2. The protein operates within cofactor biosynthesis; (R)-pantothenate biosynthesis; beta-alanine from L-aspartate: step 1/1. Its function is as follows. Catalyzes the pyruvoyl-dependent decarboxylation of aspartate to produce beta-alanine. The chain is Aspartate 1-decarboxylase from Legionella pneumophila subsp. pneumophila (strain Philadelphia 1 / ATCC 33152 / DSM 7513).